Consider the following 274-residue polypeptide: MFRLLLLALSCLESTVFMASVSISRSKPVGIVGGQRTPPGKWPWQVSLRMYSYEVNSWVHICGGSIIHPQWILTAAHCIQSQDADPAVYRVQVGEVYLYKEQELLNISRIIIHPDYNDVSKRFDLALMQLTALLVTSTNVSPVSLPKDSSTFDSTDQCWLVGWGNLLQRVPLQPPYQLHEVKIPIQDNKSCKRAYRKKSSDEHKAVAIFDDMLCAGTSGRGPCFGDSGGPLVCWKSNKWIQVGVVSKGIDCSNNLPSIFSRVQSSLAWIHQHIQ.

Residues 1-26 form the signal peptide; sequence MFRLLLLALSCLESTVFMASVSISRS. One can recognise a Peptidase S1 domain in the interval 31-274; the sequence is IVGGQRTPPG…SLAWIHQHIQ (244 aa). An intrachain disulfide couples Cys62 to Cys78. His77 (charge relay system) is an active-site residue. N-linked (GlcNAc...) asparagine glycosylation occurs at Asn106. The Charge relay system role is filled by Asp124. Cystine bridges form between Cys158–Cys233, Cys191–Cys214, and Cys223–Cys251. The active-site Charge relay system is the Ser227.

Belongs to the peptidase S1 family. In terms of assembly, homooligomer, heterodimer and heterotetramer. Able to form homo- and hetero- tetrameric structures. Heterotetramer is far more stable than the homotetramer. In terms of tissue distribution, expressed in embryos throughout the preimplantation period, during blastocyst hatching and embryo outgrowth. Found in uterus especially in glandular epithelium.

Its subcellular location is the secreted. Its activity is regulated as follows. Inhibited by benzamidine, (4-amidino-phenyl)-methane-sulfonyl (APMSF), N-p-tosyl-L-lysine chloromethylketone (TLCK), gabexate, mesylate, BABIM and trypsin soybean inhibitor (TSI). Functionally, involved in embryo hatching and implantation. In Mus musculus (Mouse), this protein is Serine protease 28 (Prss28).